The primary structure comprises 152 residues: Prostaglandin E synthase (152 aa).

Residues 1-12 (MPAHSLVMSSPA) are Lumenal-facing. Residues 13–41 (LPAFLLCSTLLVIKMYVVAIITGQVRLRK) traverse the membrane as a helical segment. Position 38 (Arg38) interacts with glutathione. Residues 42–60 (KAFANPEDALRHGGPQYCR) lie on the Cytoplasmic side of the membrane. Residues 61-90 (SDPDVERCLRAHRNDMETIYPFLFLGFVYS) traverse the membrane as a helical segment. 73-77 (RNDME) lines the glutathione pocket. Over 91 to 95 (FLGPN) the chain is Lumenal. A helical transmembrane segment spans residues 96–119 (PFVAWMHFLVFLVGRVAHTVAYLG). Glutathione-binding residues include His113 and Tyr117. The Cytoplasmic portion of the chain corresponds to 120–123 (KLRA). Residues 124–152 (PIRSVTYTLAQLPCASMALQILWEAARHL) form a helical membrane-spanning segment. Residue 126 to 130 (RSVTY) coordinates glutathione.

The protein belongs to the MAPEG family. In terms of assembly, homotrimer. Requires glutathione as cofactor.

The protein localises to the membrane. Its subcellular location is the cytoplasm. It is found in the perinuclear region. The catalysed reaction is prostaglandin H2 = prostaglandin E2. It catalyses the reaction 2-glyceryl-prostaglandin H2 = 2-glyceryl-prostaglandin E2. It carries out the reaction prostaglandin G2 = (15S)-15-hydroperoxy-prostaglandin E2. The enzyme catalyses 1-chloro-2,4-dinitrobenzene + glutathione = 2,4-dinitrophenyl-S-glutathione + chloride + H(+). The catalysed reaction is (5S)-hydroperoxy-(6E,8Z,11Z,14Z)-eicosatetraenoate + 2 glutathione = (5S)-hydroxy-(6E,8Z,11Z,14Z)-eicosatetraenoate + glutathione disulfide + H2O. The protein operates within lipid metabolism; prostaglandin biosynthesis. With respect to regulation, induced by interleukin IL1B. Terminal enzyme of the cyclooxygenase (COX)-2-mediated prostaglandin E2 (PGE2) biosynthetic pathway. Catalyzes the glutathione-dependent oxidoreduction of prostaglandin endoperoxide H2 (PGH2) to prostaglandin E2 (PGE2) in response to inflammatory stimuli. Plays a key role in inflammation response, fever and pain. Also catalyzes the oxidoreduction of endocannabinoids into prostaglandin glycerol esters and PGG2 into 15-hydroperoxy-PGE2. In addition, displays low glutathione transferase and glutathione-dependent peroxidase activities, toward 1-chloro-2,4-dinitrobenzene and 5-hydroperoxyicosatetraenoic acid (5-HPETE), respectively. The polypeptide is Prostaglandin E synthase (PTGES) (Homo sapiens (Human)).